The primary structure comprises 277 residues: Putative phosphoenolpyruvate synthase regulatory protein (277 aa).

157–164 (GVSRCGKT) is an ADP binding site.

Belongs to the pyruvate, phosphate/water dikinase regulatory protein family. PSRP subfamily.

The catalysed reaction is [pyruvate, water dikinase] + ADP = [pyruvate, water dikinase]-phosphate + AMP + H(+). It carries out the reaction [pyruvate, water dikinase]-phosphate + phosphate + H(+) = [pyruvate, water dikinase] + diphosphate. Bifunctional serine/threonine kinase and phosphorylase involved in the regulation of the phosphoenolpyruvate synthase (PEPS) by catalyzing its phosphorylation/dephosphorylation. The chain is Putative phosphoenolpyruvate synthase regulatory protein from Citrobacter koseri (strain ATCC BAA-895 / CDC 4225-83 / SGSC4696).